The sequence spans 519 residues: MNTSISSQPPCIRIFDTTLRDGEQSPGCSMPAQQKLVMARALDALGVDIIETGFPASSQSDYEAMTLIARELRRPTLAVLSRCLQADIETSARALESATKPRLHVFLSTSPLHREHKLRMSKEQVLESVHKHVSLSRTLIDDVEFSAEDATRTEEDFLIEVTRVAIAAGATTINLPDTVGFSTPEEIRNMFTRVIANVEGANKVIFSAHCHDDLGLAVANSLAAIEGGARQIECTINGIGERAGNCALEELTMVLKVRNAFYNIDTSIHTSRIVSTSQLLQRLVGMPVQRNKAVVGANAFAHESGIHQHGMLRHRGTYEIMRPQEVGWVCSHMVLGRHSGRAAVEQRLRALGYLLEEEDLKLVFEEFKQLCEKQRLVTDVDLQVLMQDTTVQHGYRLASMTISDVGNRANALVELSDPQGQRVAETAQGNGPVDALFGALAAATGVKLELDSYQVHSVGIGADARGEANLSVRHNDTQYEGTGTSKDIIEASALAWLEVANRLLRNPENMQNKQNTALA.

A Pyruvate carboxyltransferase domain is found at 12–274 (IRIFDTTLRD…DTSIHTSRIV (263 aa)). Aspartate 21, histidine 209, histidine 211, and asparagine 245 together coordinate Mn(2+). The segment at 396–519 (RLASMTISDV…MQNKQNTALA (124 aa)) is regulatory domain.

The protein belongs to the alpha-IPM synthase/homocitrate synthase family. LeuA type 1 subfamily. As to quaternary structure, homodimer. Mn(2+) serves as cofactor.

It localises to the cytoplasm. It carries out the reaction 3-methyl-2-oxobutanoate + acetyl-CoA + H2O = (2S)-2-isopropylmalate + CoA + H(+). The protein operates within amino-acid biosynthesis; L-leucine biosynthesis; L-leucine from 3-methyl-2-oxobutanoate: step 1/4. In terms of biological role, catalyzes the condensation of the acetyl group of acetyl-CoA with 3-methyl-2-oxobutanoate (2-ketoisovalerate) to form 3-carboxy-3-hydroxy-4-methylpentanoate (2-isopropylmalate). This chain is 2-isopropylmalate synthase, found in Xylella fastidiosa (strain M23).